The primary structure comprises 185 residues: NEDD8-conjugating enzyme UBE2F (185 aa).

A disordered region spans residues 1-21 (MLTLASKLKRDDGVKGSRTTS). Residues 1 to 29 (MLTLASKLKRDDGVKGSRTTSTTLDSMRR) are interaction with uba3. The UBC core domain maps to 32 to 185 (VRDRLLVKEV…VEDYIKRYAR (154 aa)). Cys-116 functions as the Glycyl thioester intermediate in the catalytic mechanism.

This sequence belongs to the ubiquitin-conjugating enzyme family. UBE2F subfamily.

The catalysed reaction is [E1 NEDD8-activating enzyme]-S-[NEDD8 protein]-yl-L-cysteine + [E2 NEDD8-conjugating enzyme]-L-cysteine = [E1 NEDD8-activating enzyme]-L-cysteine + [E2 NEDD8-conjugating enzyme]-S-[NEDD8-protein]-yl-L-cysteine.. The protein operates within protein modification; protein neddylation. Its function is as follows. Accepts the ubiquitin-like protein NEDD8 from the UBA3-NAE1 E1 complex and catalyzes its covalent attachment to other proteins. Together with the E3 ubiquitin ligase rnf7/rbx2, specifically neddylates cullin-5 (cul5). Does not neddylate cul1, cul2, cul3, cul4a or cul4b. The sequence is that of NEDD8-conjugating enzyme UBE2F (ube2f) from Xenopus laevis (African clawed frog).